The primary structure comprises 210 residues: 7-methyl-GTP pyrophosphatase (210 aa).

The active-site Proton acceptor is the Asp-79.

It belongs to the Maf family. YceF subfamily. A divalent metal cation is required as a cofactor.

The protein resides in the cytoplasm. The catalysed reaction is N(7)-methyl-GTP + H2O = N(7)-methyl-GMP + diphosphate + H(+). Its function is as follows. Nucleoside triphosphate pyrophosphatase that hydrolyzes 7-methyl-GTP (m(7)GTP). May have a dual role in cell division arrest and in preventing the incorporation of modified nucleotides into cellular nucleic acids. This is 7-methyl-GTP pyrophosphatase from Burkholderia lata (strain ATCC 17760 / DSM 23089 / LMG 22485 / NCIMB 9086 / R18194 / 383).